Here is a 179-residue protein sequence, read N- to C-terminus: Putative BPIFA4P protein (179 aa).

The N-terminal stretch at 1–20 is a signal peptide; sequence MLNVSGLFVLLCGLLVSSSA.

The protein belongs to the BPI/LBP/Plunc superfamily. Plunc family. As to expression, expressed in breast cancer and salivary gland.

The protein localises to the secreted. Its function is as follows. Major protein in sweat, has surfactant properties. In Homo sapiens (Human), this protein is Putative BPIFA4P protein (BPIFA4P).